Here is a 655-residue protein sequence, read N- to C-terminus: p-hydroxybenzoic acid efflux pump subunit AaeB (655 aa).

Helical transmembrane passes span 13-33, 38-58, 69-89, 93-113, 121-141, 152-172, 370-390, 407-427, 431-451, and 482-502; these read FAVK…HFQL, WAVL…GGEP, LRII…IAMI, LLMI…SSLV, WGLA…EPLL, EIVI…PRSI, LFWL…IAVV, FIYG…VIIP, QSML…GIEV, and FLDS…VILL.

Belongs to the aromatic acid exporter ArAE (TC 2.A.85) family.

The protein resides in the cell inner membrane. Its function is as follows. Forms an efflux pump with AaeA. Could function as a metabolic relief valve, allowing to eliminate certain compounds when they accumulate to high levels in the cell. The sequence is that of p-hydroxybenzoic acid efflux pump subunit AaeB from Shigella dysenteriae serotype 1 (strain Sd197).